The primary structure comprises 78 residues: uncharacterized protein (78 aa).

Positions 1 to 27 (MQNSKTDMCAALWAVTGLVLNVAVRFA) are cleaved as a signal peptide.

This is an uncharacterized protein from Dryophytes versicolor (chameleon treefrog).